Consider the following 213-residue polypeptide: Inactive ribonuclease-like protein 10 (213 aa).

The N-terminal stretch at 1–24 (MKLTLVQFFFMMLLLLLGLGVGLG) is a signal peptide. N-linked (GlcNAc...) asparagine glycosylation is present at Asn-128.

This sequence belongs to the pancreatic ribonuclease family. In terms of processing, the N-terminus is blocked. Glycosylated. Male-specific expression in proximal caput of the epididymis.

The protein localises to the secreted. In terms of biological role, secreted proximal epididymal protein required for post-testicular sperm maturation and male fertility. May be involved in sperm adhesion to the egg zona pellucida. Does not have ribonuclease activity. The polypeptide is Inactive ribonuclease-like protein 10 (RNASE10) (Sus scrofa (Pig)).